The following is a 371-amino-acid chain: Protein lifeguard 1 (371 aa).

The disordered stretch occupies residues 1-145 (MSHEKSFLVS…EGPPSYYDNQ (145 aa)). Residues 14 to 49 (YPPPNPGYPGGPQPPMPPYAQPPYPGAPYPQPPFQP) show a composition bias toward pro residues. Residues 84 to 98 (YPQEGYPQGPYPQGG) are compositionally biased toward low complexity. The span at 102–114 (GPYPQSPFPPNPY) shows a compositional bias: pro residues. 7 helical membrane passes run 165 to 185 (VFLVLTLQLSVTLSTVSVFTF), 197 to 217 (VWTYYVSYAVFFISLIVLSCC), 228 to 248 (LVALSVLTASLSYMVGMIASF), 253 to 273 (AVIMAVGITTAVCFTVVIFSM), 283 to 303 (MGVLLVSMVVLFIFAILCIFI), 307 to 327 (ILEIVYASLGALLFTCFLAVD), and 346 to 366 (FAALNLYTDIINIFLYILTII).

Belongs to the BI1 family. LFG subfamily.

The protein resides in the membrane. Its function is as follows. Potential apoptotic regulator. In Homo sapiens (Human), this protein is Protein lifeguard 1 (GRINA).